The following is a 144-amino-acid chain: Urease accessory protein UreE (144 aa).

Belongs to the UreE family.

The protein localises to the cytoplasm. Involved in urease metallocenter assembly. Binds nickel. Probably functions as a nickel donor during metallocenter assembly. This chain is Urease accessory protein UreE, found in Thermosynechococcus vestitus (strain NIES-2133 / IAM M-273 / BP-1).